A 688-amino-acid chain; its full sequence is MGLKITKGQLRTKDLNQSSSKSSQSSRIGVDTCIFTRMLPRINTAINLTEHLLRRSFHSLTNLQKTQVKERLHELERHGFILNKTSKQLERINSKKRRQLKKLQKTAYPKDQAFHILRKFHKINNEALADTKLGPTSQSDLKFLSLTKDKRLFYTILGVNGEQLRDSKLIANDVQKFLKRGQLEKAVFLARLAKKKGVVGMNLIMKYYIEVVQSQQSAVDIFNWRKKWGVPIDQHSITILFNGLSKQENLVSKKYGELVLKTIDSLCDKNELTEIEYNTALAALINCTDETLVFKLLNKKCPGLKKDSITYTLMIRSCTRIADEKRFMVVLNDLMNKIPDYCVDSKLLFEYCEVICSQKSPKIEKQGMGLWALCEYFQFDKTIFKKYLTQSDFPTLVPLSHWNINKPFPLNKHVVGLFMNYCLKNKEYDLAMEIFKTLEAQNNQMLDQSIYHKYMETVITTRPITCGDECLDIYERVASSAQISITRRTLILVYNAFQRQSLKAVINKDASNAEATLHKIRGFIDSVEATYSSKLNGKVYRFNSWKFLFPIVKNLNMNDKVSTVELKSILDEYLKSLLNGEFGKEFKASIEDKRFVTLEGIRLVKVLTERIKLPSLDSEEIASLKGTERKKFLARRHLLRLKQILLEDLADIEGNSRRKGDSENTSTSEERIMEDLAELILETSYDKF.

Residues 1–24 (MGLKITKGQLRTKDLNQSSSKSSQ) form a disordered region. The transit peptide at 1–46 (MGLKITKGQLRTKDLNQSSSKSSQSSRIGVDTCIFTRMLPRINTAI) directs the protein to the mitochondrion.

In terms of assembly, associates with the mitochondrial ribosome.

It localises to the mitochondrion. In terms of biological role, component of MIOREX complexes, large expressome-like assemblies of ribosomes with factors involved in all the steps of post-transcriptional gene expression. The chain is MIOREX complex component 1 from Saccharomyces cerevisiae (strain ATCC 204508 / S288c) (Baker's yeast).